An 81-amino-acid chain; its full sequence is MIQMALATEKALKLIESYNTLTLIVDKSDTKDDIKKSVERLFNVKVVKVNVVITPQGYKKAYVKLAPEYKASDIAHKLGIF.

Belongs to the universal ribosomal protein uL23 family. Part of the 50S ribosomal subunit. Contacts protein L29.

In terms of biological role, binds to 23S rRNA. One of the proteins that surrounds the polypeptide exit tunnel on the outside of the ribosome. The protein is Large ribosomal subunit protein uL23 of Saccharolobus solfataricus (strain ATCC 35092 / DSM 1617 / JCM 11322 / P2) (Sulfolobus solfataricus).